A 187-amino-acid polypeptide reads, in one-letter code: MVSTTTFLMLTSLATLTSARSHLTVTIGSNCTLKGPQGGHVFWWRIYDNGWFTKPCDQPGRFFCNGRDLTIINVTANDKGFYYGTDYKSSLDYNIIVLPSTTPAPRTTTFSSSSVANNTISNPTFAALLKRTVNNSTTSHTTISTSTISIIAAVTIGISILVFTITYYACCYRKDKHKGDPLLRFDI.

5 N-linked (GlcNAc...) asparagine; by host glycosylation sites follow: N30, N73, N117, N134, and N135.

Belongs to the adenoviridae E3_20 family.

This Human adenovirus B serotype 11 (strain Slobiski) (HAdV-11) protein is Early E3 20.6 kDa glycoprotein.